Consider the following 695-residue polypeptide: Calcium-dependent serine proteinase (695 aa).

A signal peptide spans 1–21 (MGKSSEAWCIVLFSVFASFSA). Residues 22–136 (EPTMHGEILS…TGFAAYYAAI (115 aa)) form the CUB 1 domain. 4 cysteine pairs are disulfide-bonded: Cys71-Cys89, Cys141-Cys153, Cys149-Cys162, and Cys164-Cys177. The 42-residue stretch at 137–178 (DVNECTDFTDVPCSHFCNNFIGGYFCSCPPEYFLHDDMRNCG) folds into the EGF-like; calcium-binding domain. (3R)-3-hydroxyasparagine is present on Asn155. The N-linked (GlcNAc...) asparagine glycan is linked to Asn180. 6 disulfides stabilise this stretch: Cys181/Cys208, Cys240/Cys257, Cys300/Cys347, Cys327/Cys360, Cys365/Cys410, and Cys392/Cys428. Residues 181-296 (CSGNVFTALI…KGWKLRYHGD (116 aa)) enclose the CUB 2 domain. Sushi domains lie at 298-362 (IPCP…RCQP) and 363-430 (VDCG…KCVP). The N-linked (GlcNAc...) asparagine glycan is linked to Asn413. Residues 445–687 (IFGGFPAKIQ…YKDWILQTMQ (243 aa)) form the Peptidase S1 domain. Catalysis depends on charge relay system residues His482 and Asp536. 2 disulfides stabilise this stretch: Cys602/Cys625 and Cys634/Cys666. Ser638 acts as the Charge relay system in catalysis.

It belongs to the peptidase S1 family. In terms of assembly, heterodimer, consisting of heavy and light chains with disulfide bonds. The heavy chain is expected to be a regulatory subunit and the light chain contains the catalytic site. In terms of processing, the iron and 2-oxoglutarate dependent 3-hydroxylation of aspartate and asparagine is (R) stereospecific within EGF domains.

The protein resides in the secreted. The protein localises to the extracellular space. It is found in the extracellular matrix. In terms of biological role, capable of degrading extracellular matrix proteins. CASP degrades type I and IV collagen and fibronectin in the presence of calcium. This chain is Calcium-dependent serine proteinase, found in Mesocricetus auratus (Golden hamster).